The primary structure comprises 988 residues: RecQ-like DNA helicase blm-1 (988 aa).

Residues cysteine 46 to leucine 119 form a disordered region. Tandem repeats lie at residues aspartate 121–glutamate 129 and glutamate 130–aspartate 138. The interval aspartate 121–aspartate 138 is 2 X 9 AA tandem repeats of [DE]-P-P-I-V-D-L-D-[ED]. A disordered region spans residues threonine 148–threonine 185. Positions alanine 158 to glutamate 174 are enriched in acidic residues. ATP contacts are provided by residues phenylalanine 248–glutamine 252 and glycine 272–serine 276. Residues isoleucine 256 to lysine 433 enclose the Helicase ATP-binding domain. Positions aspartate 375–histidine 378 match the DEAH box motif. Positions asparagine 458–leucine 603 constitute a Helicase C-terminal domain. The interval serine 478–lysine 480 is 3' overhang DNA-binding. Arginine 562 is an ATP binding site. Residues arginine 580 to arginine 583 form a 3' overhang DNA-binding region. Cysteine 615, cysteine 633, cysteine 640, and cysteine 643 together coordinate Zn(2+). 3' overhang DNA-binding stretches follow at residues threonine 676–lysine 678, alanine 687–lysine 691, and tyrosine 736–alanine 742. Residues glycine 807–arginine 888 form the HRDC domain. The interval glycine 930–methionine 988 is disordered. Positions lysine 939–proline 955 match the Nuclear localization signal motif.

It belongs to the helicase family. RecQ subfamily. As to quaternary structure, monomer. Homodimer (via N-terminus). Homotetramer (via N-terminus); dimer of dimers. Homohexamer (via N-terminus). Self-association negatively regulates DNA unwinding amplitude and rate. Oligomer forms dissociate into monomer in presence of ATP. Component of the BTR double Holliday Junction dissolution complex composed of at least him-6, top-3, rmh-1 and rmif-2, which is involved in double strand break repair in the germline. May interact with rmh-1; the interaction is required for mutual stability and localization at nuclear foci. Forms a complex composed of cdc-48.1, him-6 and crp-1; within the complex, interacts with cdc-48.1. Zn(2+) serves as cofactor.

It localises to the nucleus. The protein resides in the chromosome. The catalysed reaction is Couples ATP hydrolysis with the unwinding of duplex DNA by translocating in the 3'-5' direction.. It catalyses the reaction ATP + H2O = ADP + phosphate + H(+). Its function is as follows. Component of the BTR double Holliday Junction dissolution complex, which is involved in homologous recombination during meiotic double strand break in the germline. Stabilizes and positively regulates the localization of the BTR double Holliday Junction dissolution complex component rmh-1 at nuclear foci during meiotic recombination. Participates in DNA replication and repair. Exhibits a magnesium-dependent ATP-dependent DNA-helicase activity that unwinds single- and double-stranded DNA in a 3'-5' direction. Negatively regulates sister chromatid exchange (SCE). Functionally, ATP-dependent DNA helicase that unwinds single- and double-stranded DNA in a 3'-5' direction. Participates in DNA replication and repair. Negatively regulates sister chromatid exchange (SCE). Stimulates DNA 4-way junction branch migration and DNA Holliday junction dissolution. Binds single-stranded DNA (ssDNA), forked duplex DNA and DNA Holliday junction. The sequence is that of RecQ-like DNA helicase blm-1 from Caenorhabditis elegans.